The sequence spans 366 residues: tRNA-queuosine alpha-mannosyltransferase (366 aa).

The protein belongs to the glycosyltransferase group 1 family. Glycosyltransferase 4 subfamily.

The protein resides in the cytoplasm. Its subcellular location is the nucleus. The enzyme catalyses queuosine(34) in tRNA(Asp) + GDP-alpha-D-mannose = O-4''-alpha-D-mannosylqueuosine(34) in tRNA(Asp) + GDP + H(+). In terms of biological role, glycosyltransferase that specifically catalyzes mannosylation of cytoplasmic tRNA(Asp) modified with queuosine at position 34 (queuosine(34)). Mannosylates the cyclopentene moiety of queuosine(34) in tRNA(Asp) to form mannosyl-queuosine(34). Mannosylation of queuosine(34) in tRNA(Asp) is required to slow-down elongation at cognate codons, GAC and GAU, thereby regulating protein translation. In Bos taurus (Bovine), this protein is tRNA-queuosine alpha-mannosyltransferase (GTDC1).